A 607-amino-acid chain; its full sequence is Synaptotagmin-like protein 3 (607 aa).

The RabBD domain occupies 4–123; sequence EVDLESFKEL…IKTGEWFFEE (120 aa). The disordered stretch occupies residues 221–279; the sequence is VGHTERRSQSDTAVNVTSRKASTPDILKAFHQEDPKHPPDPVLKQDTPPSSPTHSAVFS. Polar residues predominate over residues 230 to 241; that stretch reads SDTAVNVTSRKA. Positions 248–259 are enriched in basic and acidic residues; the sequence is KAFHQEDPKHPP. C2 domains follow at residues 305–430 and 458–590; these read VTGE…ARWY and LPAG…LQWH.

Monomer. Binds NRXN1. Binds RAB27A that has been activated by GTP-binding via its N-terminus. In terms of tissue distribution, highly expressed in spleen and lung. Detected at lower levels in heart and testis.

It is found in the endomembrane system. May act as Rab effector protein and play a role in vesicle trafficking. Binds phospholipids in the presence of calcium ions. The sequence is that of Synaptotagmin-like protein 3 (Sytl3) from Mus musculus (Mouse).